Reading from the N-terminus, the 384-residue chain is Galactokinase (384 aa).

A substrate-binding site is contributed by 35-38 (EHTD). ATP is bound by residues S69 and 125–131 (GAGLSSS). Residues S131 and E163 each coordinate Mg(2+). Catalysis depends on D175, which acts as the Proton acceptor. Residue Y224 participates in substrate binding.

It belongs to the GHMP kinase family. GalK subfamily.

It localises to the cytoplasm. The enzyme catalyses alpha-D-galactose + ATP = alpha-D-galactose 1-phosphate + ADP + H(+). It participates in carbohydrate metabolism; galactose metabolism. Its function is as follows. Catalyzes the transfer of the gamma-phosphate of ATP to D-galactose to form alpha-D-galactose-1-phosphate (Gal-1-P). In Aliivibrio fischeri (strain ATCC 700601 / ES114) (Vibrio fischeri), this protein is Galactokinase.